The primary structure comprises 1014 residues: Latrophilin-like protein 1 (1014 aa).

The signal sequence occupies residues 1–27; the sequence is MRRNKTTYSLLQTILVACLLTVTPTFA. Residue N4 is glycosylated (N-linked (GlcNAc...) asparagine). Residues 28 to 555 lie on the Extracellular side of the membrane; it reads SNKPTTDESG…IDQTLLTLLT (528 aa). The SUEL-type lectin domain occupies 43–134; the sequence is ICDGEAAELS…KYLEVKYNCV (92 aa). The 184-residue stretch at 359–542 folds into the GAIN-B domain; sequence ESNVIVQPAI…AVLMDVRGHD (184 aa). N-linked (GlcNAc...) asparagine glycans are attached at residues N473 and N518. Disulfide bonds link C497–C524 and C512–C526. Positions 497–542 are GPS; that stretch reads CVWWNHHELKWKPSGCKLSYHNKTMTSCDCTHLTHFAVLMDVRGHD. Residues 556 to 576 traverse the membrane as a helical segment; that stretch reads YVGCIISIICLLLTFFAYLIF. Residues 577–584 lie on the Cytoplasmic side of the membrane; that stretch reads SRNGGDRV. Residues 585–605 traverse the membrane as a helical segment; it reads FIHENLCLSLAIAEITFLAGI. Residues 606–613 are Extracellular-facing; it reads TRTEDSLQ. A helical membrane pass occupies residues 614 to 634; that stretch reads CGIIAVALMYMFLSALTWMLL. Over 635–653 the chain is Cytoplasmic; sequence EGYHIHRMLTEVFPSDPRR. A helical transmembrane segment spans residues 654–674; sequence FTYLLVGYIPPAIITLVAYLY. At 675 to 692 the chain is on the extracellular side; it reads NSDGFGTPDHCWLSTQNN. The chain crosses the membrane as a helical span at residues 693–713; the sequence is FIWFFAGPACFIFCANSLVLV. At 714–745 the chain is on the cytoplasmic side; that stretch reads KTLCTVYQHTSGGYLPCRHDVDSGRSIRNWVK. Residues 746–766 traverse the membrane as a helical segment; sequence GSLALASLLGVTWIFGLFWVE. Topologically, residues 767–770 are extracellular; it reads DSRS. The helical transmembrane segment at 771 to 791 threads the bilayer; sequence IVMAYVFTISNSLQGLFIFLF. Residues 792 to 1014 are Cytoplasmic-facing; the sequence is HVVFAEKMRK…NKPSMYCQDL (223 aa). Disordered regions lie at residues 814 to 833 and 932 to 994; these read GSSN…DLMS and YQGW…EVTP. Residues 941-952 show a composition bias toward pro residues; the sequence is PEFSPPPPPLST. A compositionally biased stretch (low complexity) spans 965–986; that stretch reads SGRRPPSSKMSDDSAYSDGSSS.

Belongs to the G-protein coupled receptor 2 family. LN-TM7 subfamily. In terms of assembly, monomer and homodimer. In terms of processing, autoproteolytically processed at the GPS region of the GAIN-B domain; this cleavage modulates receptor activity. As to expression, expressed in epidermal precursor cells and pharyngeal primordium. In adults expression is seen in pharyngeal muscle cells and nervous system, the nerve ring, the gonad, and the vulva.

It localises to the cell membrane. Has a role in the establishment of anterior-posterior polarity in tissues during embryogenesis. Required for the alignment of the mitotic spindles and division planes. May have a role in cell death events. Required for normal defection and oocyte fertilization. Involved in sperm function. Operates in pharyngeal pumping during feeding. The sequence is that of Latrophilin-like protein 1 from Caenorhabditis elegans.